A 170-amino-acid polypeptide reads, in one-letter code: Small ribosomal subunit protein mS25 (170 aa).

This sequence belongs to the mitochondrion-specific ribosomal protein mS25 family. Component of the mitochondrial ribosome small subunit (28S) which comprises a 12S rRNA and about 30 distinct proteins.

It localises to the mitochondrion. This chain is Small ribosomal subunit protein mS25 (mrps-25), found in Caenorhabditis elegans.